We begin with the raw amino-acid sequence, 339 residues long: Methyltransferase ptaI (339 aa).

The protein belongs to the methyltransferase superfamily.

The protein operates within secondary metabolite biosynthesis. Functionally, methyltransferase; part of the gene cluster that mediates the biosynthesis of pestheic acid, a diphenyl ether which is a biosynthetic precursor of the unique chloropupukeananes. The biosynthesis initiates from condensation of acetate and malonate units catalyzed by the non-reducing PKS ptaA. As the ptaA protein is TE/CLC domain-deficient, hydrolysis and Claisen cyclization of the polyketide could be catalyzed by ptaB containing a beta-lactamase domain. The ptaB protein might hydrolyze the thioester bond between the ACP of ptaA and the intermediate to release atrochrysone carboxylic acid, which is spontaneously dehydrated to form endocrocin anthrone. Endocrocin anthrone is then converted to endocrocin, catalyzed by the anthrone oxygenase ptaC. Spontaneous decarboxylation of endocrocin occurs to generate emodin. An O-methyltransferase (ptaH or ptaI) could methylate emodin to form physcion. PtaJ could then catalyze the oxidative cleavage of physcion, and rotation of the intermediate could then afford desmethylisosulochrin. PtaF, a putative NADH-dependent oxidoreductase, might also participate in the oxidative cleavage step. Desmethylisosulochrin is then transformed by another O-methyltransferase (ptaH or ptaI) to form isosulochrin. Chlorination of isosulochrin by ptaM in the cyclohexadienone B ring then produces chloroisosulochrin. PtaE is responsible for the oxidative coupling reactions of both benzophenones isosulouchrin and chloroisosulochrin to RES-1214-1 and pestheic acid respectively, regardless of chlorination. The sequence is that of Methyltransferase ptaI from Pestalotiopsis fici (strain W106-1 / CGMCC3.15140).